A 133-amino-acid polypeptide reads, in one-letter code: uncharacterized protein (133 aa).

This is an uncharacterized protein from Homo sapiens (Human).